We begin with the raw amino-acid sequence, 179 residues long: Adenine phosphoribosyltransferase (179 aa).

The protein belongs to the purine/pyrimidine phosphoribosyltransferase family. As to quaternary structure, homodimer.

It is found in the cytoplasm. The catalysed reaction is AMP + diphosphate = 5-phospho-alpha-D-ribose 1-diphosphate + adenine. The protein operates within purine metabolism; AMP biosynthesis via salvage pathway; AMP from adenine: step 1/1. Functionally, catalyzes a salvage reaction resulting in the formation of AMP, that is energically less costly than de novo synthesis. The polypeptide is Adenine phosphoribosyltransferase (Haemophilus ducreyi (strain 35000HP / ATCC 700724)).